We begin with the raw amino-acid sequence, 95 residues long: GLCLASQLLTGLFLAMHYTSDIATAFSSVAHICRDVNYGWLIRNMHANGASFFFICIYLHIGRGLYYGSYLYKETWNIGVVLLLLVMMTAFVGYV.

3 consecutive transmembrane segments (helical) span residues 1-16 (GLCL…FLAM), 40-61 (WLIR…YLHI), and 76-95 (WNIG…VGYV). Heme b-binding residues include histidine 46 and histidine 60.

Belongs to the cytochrome b family. The cytochrome bc1 complex contains 3 respiratory subunits (MT-CYB, CYC1 and UQCRFS1), 2 core proteins (UQCRC1 and UQCRC2) and probably 6 low-molecular weight proteins. Requires heme b as cofactor.

The protein localises to the mitochondrion inner membrane. Component of the ubiquinol-cytochrome c reductase complex (complex III or cytochrome b-c1 complex) that is part of the mitochondrial respiratory chain. The b-c1 complex mediates electron transfer from ubiquinol to cytochrome c. Contributes to the generation of a proton gradient across the mitochondrial membrane that is then used for ATP synthesis. The sequence is that of Cytochrome b (mt-cyb) from Gomphosus varius (Bird wrasse).